Consider the following 22-residue polypeptide: Chlorate reductase subunit gamma (22 aa).

The tract at residues 1–22 is disordered; sequence EXSEQNPNILEIKPGDTVKVXT.

As to quaternary structure, heterotrimer of alpha, beta and gamma subunits. Requires heme b as cofactor.

It localises to the cytoplasm. In terms of biological role, may transfer electrons to the iron-sulfur centers of the beta subunit of chlorate reductase. This chain is Chlorate reductase subunit gamma, found in Stutzerimonas chloritidismutans (Pseudomonas chloritidismutans).